Consider the following 485-residue polypeptide: D-alanine--D-alanyl carrier protein ligase (485 aa).

Residue 144 to 145 (TS) participates in ATP binding. Asp189 lines the D-alanine pocket. 284–289 (NTYGPT) provides a ligand contact to ATP. Residue Val293 participates in D-alanine binding. 2 residues coordinate ATP: Asp365 and Lys473. Lys473 contacts D-alanine.

It belongs to the ATP-dependent AMP-binding enzyme family. DltA subfamily.

It is found in the cytoplasm. It catalyses the reaction holo-[D-alanyl-carrier protein] + D-alanine + ATP = D-alanyl-[D-alanyl-carrier protein] + AMP + diphosphate. Its pathway is cell wall biogenesis; lipoteichoic acid biosynthesis. Catalyzes the first step in the D-alanylation of lipoteichoic acid (LTA), the activation of D-alanine and its transfer onto the D-alanyl carrier protein (Dcp) DltC. In an ATP-dependent two-step reaction, forms a high energy D-alanyl-AMP intermediate, followed by transfer of the D-alanyl residue as a thiol ester to the phosphopantheinyl prosthetic group of the Dcp. D-alanylation of LTA plays an important role in modulating the properties of the cell wall in Gram-positive bacteria, influencing the net charge of the cell wall. This is D-alanine--D-alanyl carrier protein ligase from Staphylococcus aureus (strain MRSA252).